The following is a 231-amino-acid chain: Lytic polysaccharide monooxygenase-like protein X325 (231 aa).

The signal sequence occupies residues 1–17 (MRLSLLVTLALTALIEA). His18 lines the Cu(2+) pocket. N-linked (GlcNAc...) asparagine glycosylation is found at Asn34, Asn55, Asn98, Asn133, Asn174, and Asn180. 2 disulfide bridges follow: Cys47-Cys157 and Cys122-Cys178. Ile202 is lipidated: GPI-anchor amidated isoleucine. The propeptide at 203-231 (ASTTTGSAPRYYSWAGWLPLVAGAIWMAL) is removed in mature form.

Belongs to the X325 family. Cu(2+) serves as cofactor.

It localises to the cell membrane. Its function is as follows. Lytic polysaccharide monooxygenase-like protein that has diverged to biological functions other than polysaccharide degradation since it does not perform oxidative cleavage of polysaccharides. Acts as a cell surface-bound protein that functions in the copper-accumulation pathway. May also act as the major cell wall sensor that regulates MAP kinase-dependent hyphal anastomosis, the fusion of hyphal cells. This chain is Lytic polysaccharide monooxygenase-like protein X325, found in Hypocrea jecorina (strain QM6a) (Trichoderma reesei).